The sequence spans 292 residues: Phosphatidylserine decarboxylase proenzyme (292 aa).

Catalysis depends on charge relay system; for autoendoproteolytic cleavage activity residues Asp89, His146, and Ser252. Residue Ser252 is the Schiff-base intermediate with substrate; via pyruvic acid; for decarboxylase activity of the active site. The residue at position 252 (Ser252) is a Pyruvic acid (Ser); by autocatalysis.

The protein belongs to the phosphatidylserine decarboxylase family. PSD-B subfamily. Prokaryotic type I sub-subfamily. As to quaternary structure, heterodimer of a large membrane-associated beta subunit and a small pyruvoyl-containing alpha subunit. Pyruvate serves as cofactor. In terms of processing, is synthesized initially as an inactive proenzyme. Formation of the active enzyme involves a self-maturation process in which the active site pyruvoyl group is generated from an internal serine residue via an autocatalytic post-translational modification. Two non-identical subunits are generated from the proenzyme in this reaction, and the pyruvate is formed at the N-terminus of the alpha chain, which is derived from the carboxyl end of the proenzyme. The autoendoproteolytic cleavage occurs by a canonical serine protease mechanism, in which the side chain hydroxyl group of the serine supplies its oxygen atom to form the C-terminus of the beta chain, while the remainder of the serine residue undergoes an oxidative deamination to produce ammonia and the pyruvoyl prosthetic group on the alpha chain. During this reaction, the Ser that is part of the protease active site of the proenzyme becomes the pyruvoyl prosthetic group, which constitutes an essential element of the active site of the mature decarboxylase.

It is found in the cell membrane. It carries out the reaction a 1,2-diacyl-sn-glycero-3-phospho-L-serine + H(+) = a 1,2-diacyl-sn-glycero-3-phosphoethanolamine + CO2. It participates in phospholipid metabolism; phosphatidylethanolamine biosynthesis; phosphatidylethanolamine from CDP-diacylglycerol: step 2/2. Its function is as follows. Catalyzes the formation of phosphatidylethanolamine (PtdEtn) from phosphatidylserine (PtdSer). The sequence is that of Phosphatidylserine decarboxylase proenzyme from Shewanella baltica (strain OS223).